The following is a 136-amino-acid chain: Putative nickel-responsive regulator (136 aa).

Residues His-76, His-87, His-89, and Cys-95 each coordinate Ni(2+).

This sequence belongs to the transcriptional regulatory CopG/NikR family. Ni(2+) serves as cofactor.

Transcriptional regulator. The polypeptide is Putative nickel-responsive regulator (Desulfotalea psychrophila (strain LSv54 / DSM 12343)).